The sequence spans 199 residues: Elongation factor Ts (199 aa).

Residues 82–85 (TDFV) are involved in Mg(2+) ion dislocation from EF-Tu.

The protein belongs to the EF-Ts family.

It localises to the cytoplasm. Associates with the EF-Tu.GDP complex and induces the exchange of GDP to GTP. It remains bound to the aminoacyl-tRNA.EF-Tu.GTP complex up to the GTP hydrolysis stage on the ribosome. This is Elongation factor Ts from Leptospira interrogans serogroup Icterohaemorrhagiae serovar copenhageni (strain Fiocruz L1-130).